The sequence spans 895 residues: Eukaryotic translation initiation factor 3 subunit C (895 aa).

Positions Met1–Lys108 are disordered. Acidic residues-rich tracts occupy residues Ser11–Asp31 and Asp52–Asn75. Residues Phe638–Leu812 enclose the PCI domain. The segment covering Asp838–Gly860 has biased composition (basic and acidic residues). A disordered region spans residues Asp838–Val895. The span at Arg884–Val895 shows a compositional bias: low complexity.

Belongs to the eIF-3 subunit C family. Component of the eukaryotic translation initiation factor 3 (eIF-3) complex.

Its subcellular location is the cytoplasm. Functionally, component of the eukaryotic translation initiation factor 3 (eIF-3) complex, which is involved in protein synthesis of a specialized repertoire of mRNAs and, together with other initiation factors, stimulates binding of mRNA and methionyl-tRNAi to the 40S ribosome. The eIF-3 complex specifically targets and initiates translation of a subset of mRNAs involved in cell proliferation. This chain is Eukaryotic translation initiation factor 3 subunit C, found in Mycosarcoma maydis (Corn smut fungus).